We begin with the raw amino-acid sequence, 191 residues long: UPF0398 protein LSEI_1479 (191 aa).

Belongs to the UPF0398 family.

The sequence is that of UPF0398 protein LSEI_1479 from Lacticaseibacillus paracasei (strain ATCC 334 / BCRC 17002 / CCUG 31169 / CIP 107868 / KCTC 3260 / NRRL B-441) (Lactobacillus paracasei).